We begin with the raw amino-acid sequence, 396 residues long: Probable intron-encoded endonuclease aI3 (396 aa).

Positions 51 to 90 are disordered; sequence TNNTNNNNPADSSSYESRMRAAGNSNSNSNSNSDSNINNT. A compositionally biased stretch (low complexity) spans 74 to 90; sequence NSNSNSNSNSDSNINNT.

The protein belongs to the LAGLIDADG endonuclease family.

Its subcellular location is the mitochondrion. Its function is as follows. Mitochondrial DNA endonuclease involved in intron homing. The protein is Probable intron-encoded endonuclease aI3 (aI3) of Kluyveromyces lactis (strain ATCC 8585 / CBS 2359 / DSM 70799 / NBRC 1267 / NRRL Y-1140 / WM37) (Yeast).